The following is a 460-amino-acid chain: Photosystem II CP43 reaction center protein (460 aa).

Residue M1 is a propeptide. 5 helical membrane passes run 56–80 (LFET…PHLA), 121–142 (IVGP…RDKN), 165–187 (KALF…RFIT), 242–262 (RPFS…LSYS), and 278–299 (WYNN…ASQA). A [CaMn4O5] cluster-binding site is contributed by E354. Residues 434-458 (RARAAAAGFEKGINRENEPVLSMRP) form a helical membrane-spanning segment.

The protein belongs to the PsbB/PsbC family. PsbC subfamily. As to quaternary structure, PSII is composed of 1 copy each of membrane proteins PsbA, PsbB, PsbC, PsbD, PsbE, PsbF, PsbH, PsbI, PsbJ, PsbK, PsbL, PsbM, PsbT, PsbY, PsbZ, Psb30/Ycf12, at least 3 peripheral proteins of the oxygen-evolving complex and a large number of cofactors. It forms dimeric complexes. Binds multiple chlorophylls and provides some of the ligands for the Ca-4Mn-5O cluster of the oxygen-evolving complex. It may also provide a ligand for a Cl- that is required for oxygen evolution. PSII binds additional chlorophylls, carotenoids and specific lipids. is required as a cofactor.

It is found in the plastid. It localises to the chloroplast thylakoid membrane. Its function is as follows. One of the components of the core complex of photosystem II (PSII). It binds chlorophyll and helps catalyze the primary light-induced photochemical processes of PSII. PSII is a light-driven water:plastoquinone oxidoreductase, using light energy to abstract electrons from H(2)O, generating O(2) and a proton gradient subsequently used for ATP formation. This Cyanidium caldarium (Red alga) protein is Photosystem II CP43 reaction center protein.